Here is a 657-residue protein sequence, read N- to C-terminus: Pentatricopeptide repeat-containing protein At1g11710, mitochondrial (657 aa).

The N-terminal 74 residues, Met-1 to Ala-74, are a transit peptide targeting the mitochondrion. PPR repeat units follow at residues Ser-147–Val-181, Ser-182–Glu-216, Asn-217–Pro-251, Asn-252–Met-282, Asn-290–Cys-324, Asn-325–Val-359, Asn-360–Ile-394, Asp-395–Glu-429, Asp-430–Leu-464, Asp-465–Ser-499, Asn-500–Lys-530, Asp-531–Lys-565, Ser-568–Pro-602, and Asp-603–Pro-637.

Belongs to the PPR family. P subfamily.

It is found in the mitochondrion. This chain is Pentatricopeptide repeat-containing protein At1g11710, mitochondrial, found in Arabidopsis thaliana (Mouse-ear cress).